Consider the following 333-residue polypeptide: UPF0284 protein TGAM_0534 (333 aa).

The protein belongs to the UPF0284 family.

In Thermococcus gammatolerans (strain DSM 15229 / JCM 11827 / EJ3), this protein is UPF0284 protein TGAM_0534.